Consider the following 487-residue polypeptide: (S)-N-methylcoclaurine 3'-hydroxylase isozyme 1 (487 aa).

Residues 4–24 (TVALIAVIISSILYLLFGGSG) form a helical membrane-spanning segment. C429 contacts heme.

The protein belongs to the cytochrome P450 family. Requires heme as cofactor.

It localises to the endoplasmic reticulum membrane. The protein localises to the microsome membrane. It carries out the reaction (S)-N-methylcoclaurine + reduced [NADPH--hemoprotein reductase] + O2 = (S)-3'-hydroxy-N-methylcoclaurine + oxidized [NADPH--hemoprotein reductase] + H2O + H(+). The protein operates within alkaloid biosynthesis; (S)-reticuline biosynthesis; (S)-reticuline from (S)-norcoclaurine: step 3/4. Its function is as follows. 3'-hydroxylation of (S)-N-methylcoclaurine. This is (S)-N-methylcoclaurine 3'-hydroxylase isozyme 1 (CYP80B1) from Eschscholzia californica (California poppy).